The primary structure comprises 349 residues: Decapping nuclease RAI1 (349 aa).

E157 contacts a divalent metal cation. Position 205 (E205) interacts with substrate. 3 residues coordinate a divalent metal cation: D207, E222, and L223. K224 and Q248 together coordinate substrate.

It belongs to the DXO/Dom3Z family. As to quaternary structure, interacts with RAT1; the interaction is direct, stabilizes RAT1 protein structure and stimulates its exoribonuclease activity. The interaction also stimulates RAI1 pyrophosphohydrolase activity, probably by recruiting it to mRNA substrates. It depends on a divalent metal cation as a cofactor.

Its subcellular location is the nucleus. The catalysed reaction is a 5'-end NAD(+)-phospho-ribonucleoside in mRNA + H2O = a 5'-end phospho-ribonucleoside in mRNA + NAD(+) + H(+). The enzyme catalyses a 5'-end (N(7)-methyl 5'-triphosphoguanosine)-ribonucleoside-ribonucleotide in mRNA + H2O = a (N(7)-methyl 5'-triphosphoguanosine)-nucleoside + a 5'-end phospho-ribonucleoside in mRNA + H(+). It catalyses the reaction a 5'-end triphospho-ribonucleoside in mRNA + H2O = a 5'-end phospho-ribonucleoside in mRNA + diphosphate + H(+). In terms of biological role, decapping enzyme for NAD-capped RNAs: specifically hydrolyzes the nicotinamide adenine dinucleotide (NAD) cap from a subset of RNAs by removing the entire NAD moiety from the 5'-end of an NAD-capped RNA. The NAD-cap is present at the 5'-end of some RNAs and snoRNAs. In contrast to the canonical 5'-end N7 methylguanosine (m7G) cap, the NAD cap promotes mRNA decay. Also acts as a non-canonical decapping enzyme that removes the entire cap structure of m7G capped or incompletely capped RNAs. Has decapping activity toward incomplete 5'-end m7G cap mRNAs such as unmethylated 5'-end-capped RNA (cap0), while it has no activity toward 2'-O-ribose methylated m7G cap (cap1). Also possesses RNA 5'-pyrophosphohydrolase activity by hydrolyzing the 5'-end triphosphate to release pyrophosphates. Stimulates exoribonuclease activity of Rat1, allowing it to degrade RNAs with stable secondary structure more effectively. This is Decapping nuclease RAI1 (RAI1) from Yarrowia lipolytica (strain CLIB 122 / E 150) (Yeast).